The following is an 87-amino-acid chain: MELSIENELDKNILSILKDQDLIEDYALKVKIERCNNKYICTCDVIIIQKKLFIKKPVKIEPIKKRLMEILEAKPYNVEYRIDIRLY.

This is an uncharacterized protein from Methanocaldococcus jannaschii (strain ATCC 43067 / DSM 2661 / JAL-1 / JCM 10045 / NBRC 100440) (Methanococcus jannaschii).